Here is a 637-residue protein sequence, read N- to C-terminus: 1-deoxy-D-xylulose-5-phosphate synthase (637 aa).

Thiamine diphosphate is bound by residues His-71 and 112–114; that span reads SHA. Residue Asp-144 participates in Mg(2+) binding. Thiamine diphosphate-binding positions include 145-146, Asn-173, Tyr-284, and Glu-365; that span reads GA. Asn-173 provides a ligand contact to Mg(2+).

This sequence belongs to the transketolase family. DXPS subfamily. In terms of assembly, homodimer. It depends on Mg(2+) as a cofactor. Requires thiamine diphosphate as cofactor.

The catalysed reaction is D-glyceraldehyde 3-phosphate + pyruvate + H(+) = 1-deoxy-D-xylulose 5-phosphate + CO2. It participates in metabolic intermediate biosynthesis; 1-deoxy-D-xylulose 5-phosphate biosynthesis; 1-deoxy-D-xylulose 5-phosphate from D-glyceraldehyde 3-phosphate and pyruvate: step 1/1. Its function is as follows. Catalyzes the acyloin condensation reaction between C atoms 2 and 3 of pyruvate and glyceraldehyde 3-phosphate to yield 1-deoxy-D-xylulose-5-phosphate (DXP). The protein is 1-deoxy-D-xylulose-5-phosphate synthase of Mycolicibacterium gilvum (strain PYR-GCK) (Mycobacterium gilvum (strain PYR-GCK)).